The chain runs to 61 residues: UPF0434 protein Bfl377 (61 aa).

It belongs to the UPF0434 family.

The polypeptide is UPF0434 protein Bfl377 (Blochmanniella floridana).